A 177-amino-acid polypeptide reads, in one-letter code: MSRVGKKPVTVPSGVTATVEGQTVKMKGPKGQLQFVVHDDVDVKFEDGSVKVAPRFETNRAQALYGTARAQIANLVDGVTKGFEKKLEITGVGYRASLQGKKLQLALGYSHDVIYDIPEGITITVPKPTEINVVGIDSQKVGQVAAEIRDYRPPEPYKGKGVRYSDEFIFRKEGKKK.

Belongs to the universal ribosomal protein uL6 family. As to quaternary structure, part of the 50S ribosomal subunit.

In terms of biological role, this protein binds to the 23S rRNA, and is important in its secondary structure. It is located near the subunit interface in the base of the L7/L12 stalk, and near the tRNA binding site of the peptidyltransferase center. The protein is Large ribosomal subunit protein uL6 of Rhodopseudomonas palustris (strain BisB5).